A 144-amino-acid polypeptide reads, in one-letter code: Large ribosomal subunit protein uL15 (144 aa).

The disordered stretch occupies residues 1-50 (MRLNTLSPAAGAKSAKKRVGRGIGSGLGKTGGRGVKGAGSRSGGGVRAGF). Gly residues predominate over residues 21–50 (RGIGSGLGKTGGRGVKGAGSRSGGGVRAGF).

This sequence belongs to the universal ribosomal protein uL15 family. In terms of assembly, part of the 50S ribosomal subunit.

Its function is as follows. Binds to the 23S rRNA. In Tolumonas auensis (strain DSM 9187 / NBRC 110442 / TA 4), this protein is Large ribosomal subunit protein uL15.